A 215-amino-acid chain; its full sequence is Heart- and neural crest derivatives-expressed protein 1 (215 aa).

Disordered stretches follow at residues 53–109 and 166–198; these read APDF…RTES and LKKA…EKRI. Residues 65–89 are compositionally biased toward low complexity; it reads AAAAATAYGPDARPGQSPGRLEALG. The span at 92 to 104 shows a compositional bias: basic residues; sequence LGRRKGSGPKKER. The bHLH domain maps to 94-146; it reads RRKGSGPKKERRRTESINSAFAELRECIPNVPADTKLSKIKTLRLATSYIAYL. Thr-107 is subject to Phosphothreonine; by PLK4. Ser-109 carries the phosphoserine; by PLK4 modification.

As to quaternary structure, efficient DNA binding requires dimerization with another bHLH protein. Forms homodimers and heterodimers with TCF3 gene products E12 and E47, HAND2 and HEY1, HEY2 and HEYL (hairy-related transcription factors). Interacts with MDFIC. Interacts with SOX15; the interaction enhances HAND1-induced differentiation of trophoblast giant cells. In terms of processing, phosphorylation by PLK4 disrupts the interaction with MDFIC and leads to translocation into the nucleoplasm, allowing dimerization and transcription factor activity. As to expression, heart.

It localises to the nucleus. The protein resides in the nucleoplasm. It is found in the nucleolus. Functionally, transcription factor that plays an essential role in both trophoblast giant cell differentiation and in cardiac morphogenesis. Binds the DNA sequence 5'-NRTCTG-3' (non-canonical E-box). Acts as a transcriptional repressor of SOX15. In the adult, could be required for ongoing expression of cardiac-specific genes. This Homo sapiens (Human) protein is Heart- and neural crest derivatives-expressed protein 1 (HAND1).